A 207-amino-acid chain; its full sequence is Ras-related protein Rab-2A (207 aa).

12-20 (GDTGVGKSC) is a binding site for GTP. The Effector region motif lies at 34 to 42 (HDLTIGVEF). Residues 60–64 (DTAGQ), 118–121 (NKSD), and 148–150 (SAK) each bind GTP. Positions 187-207 (GAPTSKQDGTDQKPAGGGCCK) are disordered. Residues cysteine 205 and cysteine 206 are each lipidated (S-geranylgeranyl cysteine).

This sequence belongs to the small GTPase superfamily. Rab family.

It localises to the cell membrane. The catalysed reaction is GTP + H2O = GDP + phosphate + H(+). Regulated by guanine nucleotide exchange factors (GEFs) which promote the exchange of bound GDP for free GTP, GTPase activating proteins (GAPs) which increase the GTP hydrolysis activity, and GDP dissociation inhibitors which inhibit the dissociation of the nucleotide from the GTPase. The small GTPases Rab are key regulators of intracellular membrane trafficking, from the formation of transport vesicles to their fusion with membranes. Rabs cycle between active GTP-bound and inactive GDP-bound states. In their active state, drive transport of vesicular carriers from donor organelles to acceptor organelles to regulate the membrane traffic that maintains organelle identity and morphology. The polypeptide is Ras-related protein Rab-2A (rab2A) (Dictyostelium discoideum (Social amoeba)).